Here is a 69-residue protein sequence, read N- to C-terminus: Putative membrane protein insertion efficiency factor (69 aa).

Belongs to the UPF0161 family.

The protein localises to the cell inner membrane. Its function is as follows. Could be involved in insertion of integral membrane proteins into the membrane. This chain is Putative membrane protein insertion efficiency factor, found in Laribacter hongkongensis (strain HLHK9).